A 154-amino-acid chain; its full sequence is 6,7-dimethyl-8-ribityllumazine synthase (154 aa).

5-amino-6-(D-ribitylamino)uracil-binding positions include F22, 56–58 (AFE), and 81–83 (VLI). 86-87 (ET) provides a ligand contact to (2S)-2-hydroxy-3-oxobutyl phosphate. The Proton donor role is filled by H89. F114 contacts 5-amino-6-(D-ribitylamino)uracil. R128 serves as a coordination point for (2S)-2-hydroxy-3-oxobutyl phosphate.

Belongs to the DMRL synthase family.

It carries out the reaction (2S)-2-hydroxy-3-oxobutyl phosphate + 5-amino-6-(D-ribitylamino)uracil = 6,7-dimethyl-8-(1-D-ribityl)lumazine + phosphate + 2 H2O + H(+). Its pathway is cofactor biosynthesis; riboflavin biosynthesis; riboflavin from 2-hydroxy-3-oxobutyl phosphate and 5-amino-6-(D-ribitylamino)uracil: step 1/2. In terms of biological role, catalyzes the formation of 6,7-dimethyl-8-ribityllumazine by condensation of 5-amino-6-(D-ribitylamino)uracil with 3,4-dihydroxy-2-butanone 4-phosphate. This is the penultimate step in the biosynthesis of riboflavin. The chain is 6,7-dimethyl-8-ribityllumazine synthase from Chlamydia abortus (strain DSM 27085 / S26/3) (Chlamydophila abortus).